The primary structure comprises 206 residues: MSAEDTPEADADAAEESEPETARAKLFGEWDITDIEYSDPSTERYITVTPIAHTMGRHADKQFKKSEISIVERLINRLMQTDENTGKKQLATSIVTEAFELVHERTDENPIQVLVSAVENSAPREETVRLKYGGISVPKAVDVAPQRRVDQALKFLAEGVYGGSFKTTTTAAEALAQQLIGAANDDVQTYAVNQKEEKERVAAAAR.

Residues 1 to 19 show a composition bias toward acidic residues; sequence MSAEDTPEADADAAEESEP. A disordered region spans residues 1 to 25; that stretch reads MSAEDTPEADADAAEESEPETARAK. Position 2 is an N-acetylserine (serine 2).

This sequence belongs to the universal ribosomal protein uS7 family. In terms of assembly, part of the 30S ribosomal subunit.

Its function is as follows. One of the primary rRNA binding proteins, it binds directly to 16S rRNA where it nucleates assembly of the head domain of the 30S subunit. Is located at the subunit interface close to the decoding center. The chain is Small ribosomal subunit protein uS7 from Haloarcula marismortui (strain ATCC 43049 / DSM 3752 / JCM 8966 / VKM B-1809) (Halobacterium marismortui).